The following is a 108-amino-acid chain: Phosphoribosyl-ATP pyrophosphatase (108 aa).

Belongs to the PRA-PH family.

Its subcellular location is the cytoplasm. The enzyme catalyses 1-(5-phospho-beta-D-ribosyl)-ATP + H2O = 1-(5-phospho-beta-D-ribosyl)-5'-AMP + diphosphate + H(+). Its pathway is amino-acid biosynthesis; L-histidine biosynthesis; L-histidine from 5-phospho-alpha-D-ribose 1-diphosphate: step 2/9. The chain is Phosphoribosyl-ATP pyrophosphatase from Dechloromonas aromatica (strain RCB).